We begin with the raw amino-acid sequence, 258 residues long: Acyl-[acyl-carrier-protein]--UDP-N-acetylglucosamine O-acyltransferase (258 aa).

The protein belongs to the transferase hexapeptide repeat family. LpxA subfamily. In terms of assembly, homotrimer.

Its subcellular location is the cytoplasm. It carries out the reaction a (3R)-hydroxyacyl-[ACP] + UDP-N-acetyl-alpha-D-glucosamine = a UDP-3-O-[(3R)-3-hydroxyacyl]-N-acetyl-alpha-D-glucosamine + holo-[ACP]. The protein operates within glycolipid biosynthesis; lipid IV(A) biosynthesis; lipid IV(A) from (3R)-3-hydroxytetradecanoyl-[acyl-carrier-protein] and UDP-N-acetyl-alpha-D-glucosamine: step 1/6. Involved in the biosynthesis of lipid A, a phosphorylated glycolipid that anchors the lipopolysaccharide to the outer membrane of the cell. The protein is Acyl-[acyl-carrier-protein]--UDP-N-acetylglucosamine O-acyltransferase of Neisseria gonorrhoeae (strain ATCC 700825 / FA 1090).